The following is an 83-amino-acid chain: uncharacterized protein (83 aa).

This is an uncharacterized protein from Vaccinia virus (strain Copenhagen) (VACV).